The chain runs to 268 residues: Ubiquinone biosynthesis protein COQ4 homolog, mitochondrial (268 aa).

Residues His-171, Asp-172, His-175, and Glu-187 each contribute to the Zn(2+) site.

Belongs to the COQ4 family. In terms of assembly, component of a multi-subunit COQ enzyme complex. The cofactor is Zn(2+).

The protein localises to the mitochondrion inner membrane. The enzyme catalyses a 4-hydroxy-3-methoxy-5-(all-trans-polyprenyl)benzoate + H(+) = a 2-methoxy-6-(all-trans-polyprenyl)phenol + CO2. Its pathway is cofactor biosynthesis; ubiquinone biosynthesis. Lyase that catalyzes the C1-decarboxylation of 4-hydroxy-3-methoxy-5-(all-trans-polyprenyl)benzoic acid into 2-methoxy-6-(all-trans-polyprenyl)phenol during ubiquinone biosynthesis. This is Ubiquinone biosynthesis protein COQ4 homolog, mitochondrial from Drosophila melanogaster (Fruit fly).